Reading from the N-terminus, the 1354-residue chain is Rho-associated protein kinase 1 (1354 aa).

N-acetylserine is present on Ser2. The Protein kinase domain occupies 76-338 (YEVVKVIGRG…VEEIKRHLFF (263 aa)). ATP is bound by residues 82–90 (IGRGAFGEV) and Lys105. Asp198 (proton acceptor) is an active-site residue. The region spanning 341–409 (DQWAWETLRD…YSNRRYLSPA (69 aa)) is the AGC-kinase C-terminal domain. Residues 368-727 (FDDLEEDKGD…KKLKEEREAR (360 aa)) form an interaction with FHOD1 region. The stretch at 422 to 692 (KSLQENLQKT…RLEQEVNEHK (271 aa)) forms a coiled coil. The region spanning 479–556 (STVSQIEKEK…LEEANDLLRT (78 aa)) is the REM-1 domain. The SHROOM3 binding stretch occupies residues 707-946 (EAKSVAMCEM…AVSRLEETNS (240 aa)). The 67-residue stretch at 949-1015 (TKDIELLRKE…LAEIMNRKDF (67 aa)) folds into the RhoBD domain. The interval 998-1010 (LKTQAVNKLAEIM) is RHOA binding. A coiled-coil region spans residues 1011 to 1102 (NRKDFKIDKK…KLSDLSDSTS (92 aa)). The interval 1101-1120 (TSVASFPSADETDPNLPESR) is disordered. A phosphoserine mark is found at Ser1105 and Ser1108. The auto-inhibitory stretch occupies residues 1115–1354 (NLPESRIEGW…VVKNTSGKTS (240 aa)). One can recognise a PH domain in the interval 1118 to 1317 (ESRIEGWLSV…WVTHLVKKIP (200 aa)). Residues 1228-1283 (GHEFIPTLYHFPANCEACAKPLWHVFKPPPALECRRCHVKCHRDHLDKKEDLISPC) form a Phorbol-ester/DAG-type zinc finger. Residue Ser1328 is modified to Phosphoserine. Residues 1333–1354 (STRSTANQSFRKVVKNTSGKTS) form a disordered region.

This sequence belongs to the protein kinase superfamily. AGC Ser/Thr protein kinase family. Homodimer. Interacts with RHOA (activated by GTP), RHOB, RHOC, GEM, MYLC2B, RHOE, PPP1R12A, LIMK1, LIMK2, TSG101, CHORDC1, DAPK3, PFN1, PTEN and JIP3. Interacts with FHOD1 in a Src-dependent manner. Interacts with ITGB1BP1 (via N-terminus and PTB domain). Interacts with SHROOM3. It depends on Mg(2+) as a cofactor. Post-translationally, autophosphorylated on serine and threonine residues. In terms of processing, cleaved by caspase-3 during apoptosis. This leads to constitutive activation of the kinase and membrane blebbing. Detected in corneal epithelium.

It is found in the cytoplasm. Its subcellular location is the cytoskeleton. The protein resides in the microtubule organizing center. The protein localises to the centrosome. It localises to the centriole. It is found in the golgi apparatus membrane. Its subcellular location is the cell projection. The protein resides in the bleb. The protein localises to the cell membrane. It localises to the lamellipodium. It is found in the ruffle. It catalyses the reaction L-seryl-[protein] + ATP = O-phospho-L-seryl-[protein] + ADP + H(+). It carries out the reaction L-threonyl-[protein] + ATP = O-phospho-L-threonyl-[protein] + ADP + H(+). Activated by RHOA binding. Inhibited by Y-27632. Its function is as follows. Protein kinase which is a key regulator of the actin cytoskeleton and cell polarity. Involved in regulation of smooth muscle contraction, actin cytoskeleton organization, stress fiber and focal adhesion formation, neurite retraction, cell adhesion and motility via phosphorylation of DAPK3, GFAP, LIMK1, LIMK2, MYL9/MLC2, TPPP, PFN1 and PPP1R12A. Phosphorylates FHOD1 and acts synergistically with it to promote SRC-dependent non-apoptotic plasma membrane blebbing. Phosphorylates JIP3 and regulates the recruitment of JNK to JIP3 upon UVB-induced stress. Acts as a suppressor of inflammatory cell migration by regulating PTEN phosphorylation and stability. Acts as a negative regulator of VEGF-induced angiogenic endothelial cell activation. Required for centrosome positioning and centrosome-dependent exit from mitosis. Plays a role in terminal erythroid differentiation. Inhibits podocyte motility via regulation of actin cytoskeletal dynamics and phosphorylation of CFL1. Promotes keratinocyte terminal differentiation. Involved in osteoblast compaction through the fibronectin fibrillogenesis cell-mediated matrix assembly process, essential for osteoblast mineralization. May regulate closure of the eyelids and ventral body wall by inducing the assembly of actomyosin bundles. The sequence is that of Rho-associated protein kinase 1 (ROCK1) from Oryctolagus cuniculus (Rabbit).